A 218-amino-acid polypeptide reads, in one-letter code: Carnitine transport permease protein OpuCB (218 aa).

Residues 19-198 enclose the ABC transmembrane type-1 domain; that stretch reads TWQHLFISLS…ILALVVEFAL (180 aa). 5 helical membrane passes run 23 to 43, 48 to 68, 79 to 101, 149 to 169, and 179 to 199; these read LFIS…TGIL, PKVA…PSLA, VGTL…RNTF, VIAW…DFIF, and LILG…FALG.

This sequence belongs to the binding-protein-dependent transport system permease family. The complex is composed of two ATP-binding proteins (OpuCA), two transmembrane proteins (OpuCB and OpuCD) and a solute-binding protein (OpuCC).

It is found in the cell membrane. Its function is as follows. Part of the ABC transporter complex OpuCABCD involved in carnitine uptake. Probably responsible for the translocation of the substrate across the membrane. Involved, with BetL and GbuABC, in osmoprotection and cryoprotection of Listeria. This is Carnitine transport permease protein OpuCB (opuCB) from Listeria monocytogenes.